The chain runs to 394 residues: Elongation factor Tu (394 aa).

The region spanning 10-204 is the tr-type G domain; that stretch reads KPHVNVGTIG…FLDSYIPEPE (195 aa). The segment at 19-26 is G1; that stretch reads GHVDHGKT. 19–26 is a binding site for GTP; sequence GHVDHGKT. Threonine 26 contacts Mg(2+). The G2 stretch occupies residues 60 to 64; that stretch reads GITIN. The interval 81-84 is G3; the sequence is DCPG. GTP is bound by residues 81–85 and 136–139; these read DCPGH and NKCD. A G4 region spans residues 136 to 139; it reads NKCD. Residues 174-176 form a G5 region; the sequence is SAL.

The protein belongs to the TRAFAC class translation factor GTPase superfamily. Classic translation factor GTPase family. EF-Tu/EF-1A subfamily. Monomer.

The protein localises to the cytoplasm. The enzyme catalyses GTP + H2O = GDP + phosphate + H(+). GTP hydrolase that promotes the GTP-dependent binding of aminoacyl-tRNA to the A-site of ribosomes during protein biosynthesis. This chain is Elongation factor Tu, found in Salmonella arizonae (strain ATCC BAA-731 / CDC346-86 / RSK2980).